Reading from the N-terminus, the 337-residue chain is Low-density lipoprotein receptor class A domain-containing protein 3 (337 aa).

Positions 1-13 (MWLLYLILGSVES) are cleaved as a signal peptide. The Extracellular segment spans residues 14-169 (QLLPGNNHTT…NQLLYYPSIT (156 aa)). A glycan (N-linked (GlcNAc...) asparagine) is linked at Asn-20. LDL-receptor class A domains are found at residues 24–61 (ECNI…KECP), 66–103 (RCGP…ENCT), and 108–144 (LCSN…EHCH). Intrachain disulfides connect Cys-25-Cys-38, Cys-33-Cys-51, Cys-45-Cys-60, Cys-67-Cys-80, Cys-74-Cys-93, Cys-87-Cys-102, Cys-109-Cys-121, Cys-116-Cys-134, and Cys-128-Cys-143. Asn-101 carries N-linked (GlcNAc...) asparagine glycosylation. Residues 170 to 190 (YTIIGSSVIFVLVVALLALVL) form a helical membrane-spanning segment. Topologically, residues 191–337 (HHQRKRNLMS…DDLPSTEVDV (147 aa)) are cytoplasmic. Residues 243–253 (QQPVSVESPPS) show a composition bias toward polar residues. The interval 243–337 (QQPVSVESPP…DDLPSTEVDV (95 aa)) is disordered. Low complexity predominate over residues 291-303 (RSRTGSSASAGST).

It belongs to the LDLR family.

The protein localises to the cell membrane. The sequence is that of Low-density lipoprotein receptor class A domain-containing protein 3 from Xenopus tropicalis (Western clawed frog).